Reading from the N-terminus, the 139-residue chain is NADPH-dependent 7-cyano-7-deazaguanine reductase (139 aa).

Cys-34 acts as the Thioimide intermediate in catalysis. Catalysis depends on Asp-41, which acts as the Proton donor. Residues 56-58 and 75-76 contribute to the substrate site; these read VEL and HE.

It belongs to the GTP cyclohydrolase I family. QueF type 1 subfamily.

The protein localises to the cytoplasm. It catalyses the reaction 7-aminomethyl-7-carbaguanine + 2 NADP(+) = 7-cyano-7-deazaguanine + 2 NADPH + 3 H(+). The protein operates within tRNA modification; tRNA-queuosine biosynthesis. Its function is as follows. Catalyzes the NADPH-dependent reduction of 7-cyano-7-deazaguanine (preQ0) to 7-aminomethyl-7-deazaguanine (preQ1). This chain is NADPH-dependent 7-cyano-7-deazaguanine reductase, found in Nitrosospira multiformis (strain ATCC 25196 / NCIMB 11849 / C 71).